The chain runs to 245 residues: Ribonuclease 3 (245 aa).

An RNase III domain is found at 24 to 146 (YAVFLQKLGY…IIGAIYLESG (123 aa)). Glu-59 contacts Mg(2+). Residue Asp-63 is part of the active site. 2 residues coordinate Mg(2+): Asn-132 and Glu-135. Glu-135 is an active-site residue. Positions 173-243 (DSKTLLQEYL…ARQAYELAIV (71 aa)) constitute a DRBM domain.

It belongs to the ribonuclease III family. As to quaternary structure, homodimer. Requires Mg(2+) as cofactor.

The protein resides in the cytoplasm. The enzyme catalyses Endonucleolytic cleavage to 5'-phosphomonoester.. Functionally, digests double-stranded RNA. Involved in the processing of primary rRNA transcript to yield the immediate precursors to the large and small rRNAs (23S and 16S). Processes some mRNAs, and tRNAs when they are encoded in the rRNA operon. Processes pre-crRNA and tracrRNA of type II CRISPR loci if present in the organism. The polypeptide is Ribonuclease 3 (Nitrosomonas europaea (strain ATCC 19718 / CIP 103999 / KCTC 2705 / NBRC 14298)).